The sequence spans 230 residues: DAG protein, chloroplastic (230 aa).

Residues 1–55 (MATINLSLLPKTLTPNSKTLAPLLSILSTSSLSFLPCTRPHPIKSRSAAYPTVRA) constitute a chloroplast transit peptide. Positions 189 to 230 (PTYQPKQSRSSKYKSKAYVRQRDGPPAEQRRPKQEATPESST) are disordered. The span at 197-207 (RSSKYKSKAYV) shows a compositional bias: basic residues. Positions 208 to 224 (RQRDGPPAEQRRPKQEA) are enriched in basic and acidic residues.

In terms of tissue distribution, expressed in leaves, flowers including petals, and to a low level in roots.

It localises to the plastid. It is found in the chloroplast. In terms of biological role, acts very early in chloroplast development, being required for expression of RNA polymerase beta subunit gene, and hence indirectly for subsequent expression of CAB and RBCS genes. The chain is DAG protein, chloroplastic (DAG) from Antirrhinum majus (Garden snapdragon).